Here is a 170-residue protein sequence, read N- to C-terminus: Methanogen homoaconitase small subunit (170 aa).

The YLRT signature appears at 24–27 (YLRT).

Belongs to the LeuD family. LeuD type 2 subfamily. As to quaternary structure, heterotetramer of 2 HacA and 2 HacB proteins. Cannot form a complex with LeuC.

It catalyses the reaction (2R)-homocitrate = (2R,3S)-homoisocitrate. It carries out the reaction (2R)-homocitrate = cis-homoaconitate + H2O. The enzyme catalyses (2R,3S)-homoisocitrate = cis-homoaconitate + H2O. The catalysed reaction is cis-(homo)2aconitate + H2O = (2R,3S)-iso(homo)2citrate. It catalyses the reaction cis-(homo)3aconitate + H2O = (2R,3S)-iso(homo)3citrate. It carries out the reaction (R)-malate = maleate + H2O. The enzyme catalyses cis-aconitate + H2O = D-threo-isocitrate. It participates in organic acid metabolism; 2-oxosuberate biosynthesis. In terms of biological role, component of a hydro-lyase with broad substrate specificity for cis-unsaturated tricarboxylic acids. Catalyzes both the reversible dehydration of (R)-homocitrate ((R)-2-hydroxybutane-1,2,4-tricarboxylate) to produce cis-homoaconitate ((Z)-but-1-ene-1,2,4-tricarboxylate), and its hydration to homoisocitrate ((1R,2S)-1-hydroxybutane-1,2,4-tricarboxylate). Is also able to hydrate the analogous longer chain substrates cis-homo(2)-aconitate, cis-homo(3)-aconitate, and even the non-physiological cis-homo(4)-aconitate with similar efficiency. These reactions are part of the biosynthesis pathway of coenzyme B. Can also catalyze the hydration of maleate to (R)-malate, and that of cis-aconitate. Cannot catalyze the hydration of citraconate and the dehydration of (S)-homocitrate, citramalate, 2-isopropylmalate, 3-isopropylmalate, citrate or threo-DL-isocitrate. In Methanocaldococcus jannaschii (strain ATCC 43067 / DSM 2661 / JAL-1 / JCM 10045 / NBRC 100440) (Methanococcus jannaschii), this protein is Methanogen homoaconitase small subunit (hacB).